The sequence spans 330 residues: 7,8-didemethyl-8-hydroxy-5-deazariboflavin synthase (330 aa).

In terms of domain architecture, Radical SAM core spans 13–253 (VTFSKNAFIP…EDISIQVPPN (241 aa)). [4Fe-4S] cluster contacts are provided by cysteine 27, cysteine 31, and cysteine 34.

This sequence belongs to the radical SAM superfamily. CofG family. Consists of two subunits, CofG and CofH. [4Fe-4S] cluster is required as a cofactor.

The catalysed reaction is 5-amino-5-(4-hydroxybenzyl)-6-(D-ribitylimino)-5,6-dihydrouracil + S-adenosyl-L-methionine = 7,8-didemethyl-8-hydroxy-5-deazariboflavin + 5'-deoxyadenosine + L-methionine + NH4(+) + H(+). The protein operates within cofactor biosynthesis; coenzyme F0 biosynthesis. In terms of biological role, catalyzes the radical-mediated synthesis of 7,8-didemethyl-8-hydroxy-5-deazariboflavin from 5-amino-5-(4-hydroxybenzyl)-6-(D-ribitylimino)-5,6-dihydrouracil. This Methanococcus maripaludis (strain DSM 14266 / JCM 13030 / NBRC 101832 / S2 / LL) protein is 7,8-didemethyl-8-hydroxy-5-deazariboflavin synthase.